A 331-amino-acid chain; its full sequence is MWLWEDQGGLLGPFSFVLVLLLVVTRSPFNACVLTGSLYILLRFFSFEPVPSRRALQVLKPRDRVSAIAHRGGSHDAPENTLAAIRQAAKNGATGVELDIEFTSDGVPVLMHDNTVDRTTDGSGRLCDLTFEQVRKLNPAANHRLRNEFPDERIPTLKEAVTECLRHNLTIFFDVKGHADMASAALKNIYTEFPQLYNNSMVCSFLPEVIYKMRQTDQKVITALTHRPWSLSHTGDGKPRYSVFWKQSVFVVLDILLDWSMHNVLWYLCGISAFLMQKDFVSPDYLKKWSAKGIQVVSWTVNTFDEKNYYESHLGSSYITDSMLEDCAPHF.

The Cytoplasmic portion of the chain corresponds to 1-3 (MWL). The helical transmembrane segment at 4–24 (WEDQGGLLGPFSFVLVLLLVV) threads the bilayer. Over 25–248 (TRSPFNACVL…PRYSVFWKQS (224 aa)) the chain is Lumenal. In terms of domain architecture, GP-PDE spans 65–331 (VSAIAHRGGS…SMLEDCAPHF (267 aa)). Mg(2+) contacts are provided by Glu97 and Asp99. Asn168 carries an N-linked (GlcNAc...) asparagine glycan. Asp174 contacts Mg(2+). Residues 249 to 269 (VFVVLDILLDWSMHNVLWYLC) form a helical membrane-spanning segment. Over 270–331 (GISAFLMQKD…SMLEDCAPHF (62 aa)) the chain is Cytoplasmic.

This sequence belongs to the glycerophosphoryl diester phosphodiesterase family. In terms of assembly, interacts with PRAF2. Interacts with RGS16. The cofactor is Mg(2+). Post-translationally, N-glycosylated. Widely expressed. Highly expressed in the brain and spinal cord, followed by kidney, liver, and testis. In contrast, little or no expression is detected in the heart or spleen.

The protein resides in the cell membrane. It is found in the cytoplasmic vesicle membrane. The enzyme catalyses sn-glycero-3-phospho-1D-myo-inositol + H2O = myo-inositol + sn-glycerol 3-phosphate + H(+). It catalyses the reaction 1-O-(1Z-octadecenyl)-sn-glycero-3-phospho-(N-5Z,8Z,11Z,14Z-eicosatetraenoyl)-ethanolamine + H2O = 1-O-(1Z-octadecenyl)-sn-glycero-3-phosphate + N-(5Z,8Z,11Z,14Z-eicosatetraenoyl)-ethanolamine + H(+). It carries out the reaction 1-O-(1Z-octadecenyl)-sn-glycero-3-phospho-(N-9Z-octadecenoyl)-ethanolamine + H2O = 1-O-(1Z-octadecenyl)-sn-glycero-3-phosphate + N-(9Z-octadecenoyl) ethanolamine + H(+). The catalysed reaction is 1-O-(1Z-octadecenyl)-sn-glycero-3-phospho-N-hexadecanoyl-ethanolamine + H2O = 1-O-(1Z-octadecenyl)-sn-glycero-3-phosphate + N-hexadecanoylethanolamine + H(+). The enzyme catalyses N-(4Z,7Z,10Z,13Z,16Z,19Z)-docosahexaenoyl-sn-glycero-3-phosphoethanolamine + H2O = N-(4Z,7Z,10Z,13Z,16Z,19Z)-docosahexaenoyl ethanolamine + sn-glycerol 3-phosphate + H(+). It catalyses the reaction N-eicosanoyl-sn-glycero-3-phosphoethanolamine + H2O = N-eicosanoyl ethanolamine + sn-glycerol 3-phosphate + H(+). It carries out the reaction N-hexadecanoyl-sn-glycero-3-phosphoethanolamine + H2O = N-hexadecanoylethanolamine + sn-glycerol 3-phosphate + H(+). The catalysed reaction is N-(9Z-octadecenoyl)-sn-glycero-3-phosphoethanolamine + H2O = N-(9Z-octadecenoyl) ethanolamine + sn-glycerol 3-phosphate + H(+). The enzyme catalyses N-(5Z,8Z,11Z,14Z-eicosatetraenoyl)-sn-glycero-3-phosphoethanolamine + H2O = N-(5Z,8Z,11Z,14Z-eicosatetraenoyl)-ethanolamine + sn-glycerol 3-phosphate + H(+). With respect to regulation, inhibited by EDTA, calcium chloride, and zinc chloride. Enhanced by magnesium chloride. Glycerophosphodiester phosphodiesterase activity can be modulated by G-protein signaling pathways. Functionally, hydrolyzes the phosphodiester bond of glycerophosphodiesters such as glycerophosphoinositol (GroPIns) and glycerophosphoethanolamine (GroPEth), to yield a glycerol phosphate and an alcohol. Hydrolyzes glycerophospho-N-acylethanolamines to N-acylethanolamines in the brain and participates in bioactive N-acylethanolamine biosynthesis such as anandamide (an endocannabinoid), N-palmitoylethanolamine (an anti-inflammatory), and N-oleoylethanolamine (an anorexic). In addition, has a lysophospholipase D activity by hydrolyzing N-acyl-lysoplasmenylethanolamine (N-acyl-lysoPlsEt) to N-acylethanolamine. However lysophospholipase D activity is lower than glycerophosphodiester phosphodiesterase activity. Has little or no activity towards glycerophosphocholine. This Mus musculus (Mouse) protein is Glycerophosphodiester phosphodiesterase 1.